Consider the following 300-residue polypeptide: Protease HtpX (300 aa).

2 consecutive transmembrane segments (helical) span residues 4-24 and 40-60; these read ILLFLATNLAVVLVASITLRL and SLLIFCFVIGMAGSLVSLFIS. Position 145 (His145) interacts with Zn(2+). Glu146 is a catalytic residue. His149 is a binding site for Zn(2+). A run of 2 helical transmembrane segments spans residues 153-173 and 193-213; these read GDMVTLALIQGVLNTFVMFFA and LGFFGYMAVVIVAEIVFGLVA. Glu225 lines the Zn(2+) pocket.

Belongs to the peptidase M48B family. It depends on Zn(2+) as a cofactor.

It is found in the cell inner membrane. In Chromohalobacter salexigens (strain ATCC BAA-138 / DSM 3043 / CIP 106854 / NCIMB 13768 / 1H11), this protein is Protease HtpX.